The primary structure comprises 361 residues: MLLWLADWLGEYVRAFNVFNYVTLRAVLASLTALGIGLALGPWVIRKLAELKVGQAVRTDGPQTHLVKTGTPTMGGTLILLSIGITTLLWADLTNKYVWLLLAVLFGTGAIGFYDDWRKVVYKDPKGISARAKMFWQSAIAIFAGIYLISTASLPAATELIVPFFKHVIYPFGVVGFCILTYFVIVGTSNAVNLTDGLDGLAAMPVVMVSAALAVFAYVAGNSVFASYLSLPHIPGAHEVAVFCAAMAGACLAFLWFNAYPAQVFMGDVGALALGAALGTVAVIVRQEIVLFVMGGLFVMEALSVMIQVASFKLTGKRVFRMAPLHHHFELKGWKETQVVVRFWIITMMLVLAGLSTLKLR.

10 consecutive transmembrane segments (helical) span residues 25-45 (RAVL…PWVI), 73-93 (TMGG…WADL), 97-117 (YVWL…YDDW), 134-154 (MFWQ…TASL), 168-188 (VIYP…IVGT), 200-220 (GLAA…AYVA), 240-260 (VAVF…FNAY), 264-284 (VFMG…VAVI), 289-309 (IVLF…MIQV), and 338-358 (QVVV…LSTL).

It belongs to the glycosyltransferase 4 family. MraY subfamily. It depends on Mg(2+) as a cofactor.

The protein localises to the cell inner membrane. It catalyses the reaction UDP-N-acetyl-alpha-D-muramoyl-L-alanyl-gamma-D-glutamyl-meso-2,6-diaminopimeloyl-D-alanyl-D-alanine + di-trans,octa-cis-undecaprenyl phosphate = di-trans,octa-cis-undecaprenyl diphospho-N-acetyl-alpha-D-muramoyl-L-alanyl-D-glutamyl-meso-2,6-diaminopimeloyl-D-alanyl-D-alanine + UMP. It functions in the pathway cell wall biogenesis; peptidoglycan biosynthesis. Functionally, catalyzes the initial step of the lipid cycle reactions in the biosynthesis of the cell wall peptidoglycan: transfers peptidoglycan precursor phospho-MurNAc-pentapeptide from UDP-MurNAc-pentapeptide onto the lipid carrier undecaprenyl phosphate, yielding undecaprenyl-pyrophosphoryl-MurNAc-pentapeptide, known as lipid I. The protein is Phospho-N-acetylmuramoyl-pentapeptide-transferase of Laribacter hongkongensis (strain HLHK9).